A 186-amino-acid chain; its full sequence is Putative thiamine-phosphate synthase 2 (186 aa).

Residues 35-39 (QLREK) and N67 contribute to the 4-amino-2-methyl-5-(diphosphooxymethyl)pyrimidine site. Position 68 (E68) interacts with Mg(2+). S105 provides a ligand contact to 4-amino-2-methyl-5-(diphosphooxymethyl)pyrimidine. 131-133 (TSS) serves as a coordination point for 2-[(2R,5Z)-2-carboxy-4-methylthiazol-5(2H)-ylidene]ethyl phosphate. H134 serves as a coordination point for 4-amino-2-methyl-5-(diphosphooxymethyl)pyrimidine. Residues G161 and 181–182 (IS) contribute to the 2-[(2R,5Z)-2-carboxy-4-methylthiazol-5(2H)-ylidene]ethyl phosphate site.

The protein belongs to the thiamine-phosphate synthase family. Requires Mg(2+) as cofactor.

The catalysed reaction is 2-[(2R,5Z)-2-carboxy-4-methylthiazol-5(2H)-ylidene]ethyl phosphate + 4-amino-2-methyl-5-(diphosphooxymethyl)pyrimidine + 2 H(+) = thiamine phosphate + CO2 + diphosphate. It catalyses the reaction 2-(2-carboxy-4-methylthiazol-5-yl)ethyl phosphate + 4-amino-2-methyl-5-(diphosphooxymethyl)pyrimidine + 2 H(+) = thiamine phosphate + CO2 + diphosphate. It carries out the reaction 4-methyl-5-(2-phosphooxyethyl)-thiazole + 4-amino-2-methyl-5-(diphosphooxymethyl)pyrimidine + H(+) = thiamine phosphate + diphosphate. It functions in the pathway cofactor biosynthesis; thiamine diphosphate biosynthesis; thiamine phosphate from 4-amino-2-methyl-5-diphosphomethylpyrimidine and 4-methyl-5-(2-phosphoethyl)-thiazole: step 1/1. Functionally, condenses 4-methyl-5-(beta-hydroxyethyl)thiazole monophosphate (THZ-P) and 2-methyl-4-amino-5-hydroxymethyl pyrimidine pyrophosphate (HMP-PP) to form thiamine monophosphate (TMP). This is Putative thiamine-phosphate synthase 2 (thiE2) from Aquifex aeolicus (strain VF5).